Consider the following 160-residue polypeptide: Crossover junction endodeoxyribonuclease RuvC (160 aa).

Active-site residues include Asp9, Glu68, and Asp141. 3 residues coordinate Mg(2+): Asp9, Glu68, and Asp141.

Belongs to the RuvC family. In terms of assembly, homodimer which binds Holliday junction (HJ) DNA. The HJ becomes 2-fold symmetrical on binding to RuvC with unstacked arms; it has a different conformation from HJ DNA in complex with RuvA. In the full resolvosome a probable DNA-RuvA(4)-RuvB(12)-RuvC(2) complex forms which resolves the HJ. It depends on Mg(2+) as a cofactor.

It localises to the cytoplasm. It carries out the reaction Endonucleolytic cleavage at a junction such as a reciprocal single-stranded crossover between two homologous DNA duplexes (Holliday junction).. Its function is as follows. The RuvA-RuvB-RuvC complex processes Holliday junction (HJ) DNA during genetic recombination and DNA repair. Endonuclease that resolves HJ intermediates. Cleaves cruciform DNA by making single-stranded nicks across the HJ at symmetrical positions within the homologous arms, yielding a 5'-phosphate and a 3'-hydroxyl group; requires a central core of homology in the junction. The consensus cleavage sequence is 5'-(A/T)TT(C/G)-3'. Cleavage occurs on the 3'-side of the TT dinucleotide at the point of strand exchange. HJ branch migration catalyzed by RuvA-RuvB allows RuvC to scan DNA until it finds its consensus sequence, where it cleaves and resolves the cruciform DNA. The chain is Crossover junction endodeoxyribonuclease RuvC from Campylobacter jejuni subsp. jejuni serotype O:23/36 (strain 81-176).